A 282-amino-acid polypeptide reads, in one-letter code: Pantothenate synthetase (282 aa).

Residue 30–37 coordinates ATP; it reads MGYYHAGH. The Proton donor role is filled by H37. Position 61 (Q61) interacts with (R)-pantoate. A beta-alanine-binding site is contributed by Q61. Residue 147-150 participates in ATP binding; that stretch reads GQKD. Q153 contacts (R)-pantoate. Residues V176 and 184–187 each bind ATP; that span reads LSSR.

It belongs to the pantothenate synthetase family. Homodimer.

The protein localises to the cytoplasm. The catalysed reaction is (R)-pantoate + beta-alanine + ATP = (R)-pantothenate + AMP + diphosphate + H(+). The protein operates within cofactor biosynthesis; (R)-pantothenate biosynthesis; (R)-pantothenate from (R)-pantoate and beta-alanine: step 1/1. Catalyzes the condensation of pantoate with beta-alanine in an ATP-dependent reaction via a pantoyl-adenylate intermediate. The protein is Pantothenate synthetase of Desulfovibrio desulfuricans (strain ATCC 27774 / DSM 6949 / MB).